The chain runs to 441 residues: POC1 centriolar protein homolog A (441 aa).

7 WD repeats span residues 16–55 (GHRDTVTAVDFNANTKQLASGSMDSCLMVWNMKTQMRAYR), 58–97 (GHKDAILSVDFSPSGHLIASASRDKTVRLWVPSVKGESTA), 100–139 (AHTGTVRSVSFSGDGQSLVTASDDKTIKVWTVHRQKFLFS), 142–181 (QHINWVRCAKFSPDGRLIVSASDDKTIKLWDKTSRECIQS), 184–223 (EHGGFVNFVDFHPSGTCIAAAATDNTVKVWDIRMNKLIQH), 226–265 (VHSGVVNSLSFHPSGNYLITASNDSTLKVLDLLEGRLLYT), and 268–307 (GHQGPVTCVKFSREGDFFASGGSDEQVMVWKTNFDAGSYP). A disordered region spans residues 347–376 (DLEPHITEMSVKDRSSPLSYTSRSVDQHHP). Over residues 348-361 (LEPHITEMSVKDRS) the composition is skewed to basic and acidic residues. Positions 400 to 427 (LTRTVGILEQRLSLTEDKLKECIEQQQA) form a coiled coil.

Belongs to the WD repeat POC1 family. In terms of assembly, interacts with pat.

It is found in the cytoplasm. The protein resides in the cytoskeleton. In terms of biological role, may play an important role in centriole assembly and/or stability and ciliogenesis. This is POC1 centriolar protein homolog A (poc1a) from Xenopus laevis (African clawed frog).